The chain runs to 658 residues: D-ornithine--citrate ligase (658 aa).

This sequence belongs to the IucA/IucC family.

The catalysed reaction is D-ornithine + citrate + ATP = N(5)-[(S)-citryl]-D-ornithine + AMP + diphosphate + H(+). It functions in the pathway siderophore biosynthesis. Its function is as follows. Involved in the biosynthesis of the siderophore staphyloferrin A. Catalyzes the ATP-dependent condensation of D-ornithine and citrate to form a citryl-D-ornithine intermediate. The sequence is that of D-ornithine--citrate ligase from Staphylococcus aureus (strain NCTC 8325 / PS 47).